Reading from the N-terminus, the 334-residue chain is L-lactate dehydrogenase B-B chain (334 aa).

NAD(+)-binding positions include 30–58 (GQVGMACAVSVLLRELADELALVDVVEDK) and R100. Substrate contacts are provided by R107, N139, and R170. N139 is an NAD(+) binding site. Residue H194 is the Proton acceptor of the active site. T249 is a substrate binding site.

This sequence belongs to the LDH/MDH superfamily. LDH family. As to quaternary structure, homotetramer.

Its subcellular location is the cytoplasm. It carries out the reaction (S)-lactate + NAD(+) = pyruvate + NADH + H(+). It functions in the pathway fermentation; pyruvate fermentation to lactate; (S)-lactate from pyruvate: step 1/1. The chain is L-lactate dehydrogenase B-B chain from Danio rerio (Zebrafish).